Here is a 96-residue protein sequence, read N- to C-terminus: Co-chaperonin GroES (96 aa).

This sequence belongs to the GroES chaperonin family. Heptamer of 7 subunits arranged in a ring. Interacts with the chaperonin GroEL.

It localises to the cytoplasm. Its function is as follows. Together with the chaperonin GroEL, plays an essential role in assisting protein folding. The GroEL-GroES system forms a nano-cage that allows encapsulation of the non-native substrate proteins and provides a physical environment optimized to promote and accelerate protein folding. GroES binds to the apical surface of the GroEL ring, thereby capping the opening of the GroEL channel. The protein is Co-chaperonin GroES of Caulobacter sp. (strain K31).